Here is a 508-residue protein sequence, read N- to C-terminus: Maturase K (508 aa).

It belongs to the intron maturase 2 family. MatK subfamily.

It is found in the plastid. The protein localises to the chloroplast. Its function is as follows. Usually encoded in the trnK tRNA gene intron. Probably assists in splicing its own and other chloroplast group II introns. The protein is Maturase K of Coronilla varia (Crown vetch).